The sequence spans 458 residues: GDP-fucose protein O-fucosyltransferase 3 (458 aa).

Residues 1 to 11 are Cytoplasmic-facing; the sequence is MRRISVKKLCS. A helical; Signal-anchor for type II membrane protein transmembrane segment spans residues 12–32; the sequence is FCLCACAFAFLVMTFQVIELL. The Lumenal portion of the chain corresponds to 33-458; it reads GQFEQTEHRQ…TQFWREVFTD (426 aa). N-linked (GlcNAc...) asparagine glycosylation is found at N92, N150, and N300. A disulfide bridge connects residues C371 and C374. An N-linked (GlcNAc...) asparagine glycan is attached at N445.

The protein belongs to the glycosyltransferase 10 family.

It is found in the endoplasmic reticulum membrane. The enzyme catalyses L-threonyl-[protein] + GDP-beta-L-fucose = 3-O-(alpha-L-fucosyl)-L-threonyl-[protein] + GDP + H(+). It carries out the reaction L-seryl-[protein] + GDP-beta-L-fucose = 3-O-(alpha-L-fucosyl)-L-seryl-[protein] + GDP + H(+). It participates in protein modification; protein glycosylation. Its function is as follows. Protein O-fucosyltransferase that specifically catalyzes O-fucosylation of serine or threonine residues in EMI domains of target proteins. Attaches fucose through an O-glycosidic linkage. O-fucosylation of EMI domain-containing proteins may be required for facilitating protein folding and secretion. This is GDP-fucose protein O-fucosyltransferase 3 (fut10) from Danio rerio (Zebrafish).